We begin with the raw amino-acid sequence, 207 residues long: Metalloproteinase inhibitor 1 (207 aa).

The signal sequence occupies residues methionine 1 to alanine 23. Cysteine 24 contributes to the Zn(2+) binding site. Residues cysteine 24 to valine 27 form an involved in metalloproteinase-binding region. 6 cysteine pairs are disulfide-bonded: cysteine 24–cysteine 93, cysteine 26–cysteine 122, cysteine 36–cysteine 147, cysteine 150–cysteine 197, cysteine 155–cysteine 160, and cysteine 168–cysteine 189. One can recognise an NTR domain in the interval cysteine 24 to cysteine 147. The N-linked (GlcNAc...) asparagine glycan is linked to asparagine 53. An involved in metalloproteinase-binding region spans residues glutamate 90–serine 91. Asparagine 101 is a glycosylation site (N-linked (GlcNAc...) asparagine). Serine 178 carries the post-translational modification Phosphoserine.

This sequence belongs to the protease inhibitor I35 (TIMP) family. As to quaternary structure, interacts with MMP1, MMP3, MMP10 and MMP13, but has only very low affinity for MMP14. Interacts with CD63; identified in a complex with CD63 and ITGB1. In terms of processing, the activity of TIMP1 is dependent on the presence of disulfide bonds. N-glycosylated.

The protein localises to the secreted. Metalloproteinase inhibitor that functions by forming one to one complexes with target metalloproteinases, such as collagenases, and irreversibly inactivates them by binding to their catalytic zinc cofactor. Acts on MMP1, MMP2, MMP3, MMP7, MMP8, MMP9, MMP10, MMP11, MMP12, MMP13 and MMP16. Does not act on MMP14. Also functions as a growth factor that regulates cell differentiation, migration and cell death and activates cellular signaling cascades via CD63 and ITGB1. Plays a role in integrin signaling. In Oryctolagus cuniculus (Rabbit), this protein is Metalloproteinase inhibitor 1 (TIMP1).